The primary structure comprises 275 residues: Axoneme-associated protein mst101(3) (275 aa).

12 consecutive repeat copies span residues 64-79 (KKKC…EAAE), 80-95 (KKKC…EAAE), 96-111 (KKKC…EAAQ), 112-127 (KKKC…EAAE), 128-143 (KKKC…EAAE), 144-159 (RKKC…CEEA), 160-175 (AKKK…LQQK), 181-196 (KKEK…EEAA), 197-212 (KKKA…AEEV), 215-230 (KKKA…CAEA), 231-246 (KKKA…CEEA), and 249-264 (KKMC…CAEA). Positions 64–264 (KKKCAEAAKK…AALQKKCAEA (201 aa)) are 12 X 16 AA tandem repeats of [KRA]-K-[KEM]-[CKA]-[AEKD]-[EA]-[ALE]-[AMK]-[FKAML]-[KQA]-[EQKA]-[KQCEM]-[ECLA]-[AEQ]-[AEQ]-[EQAKV].

Testis.

Its subcellular location is the cytoplasm. Possible structural role in the sperm tail. The protein is Axoneme-associated protein mst101(3) (mst101(3)) of Drosophila hydei (Fruit fly).